A 281-amino-acid chain; its full sequence is Oxidoreductase-like protein SRL4 (281 aa).

Leu-39, Thr-60, Lys-67, Lys-152, and Lys-197 together coordinate NADP(+). The active-site Lowers pKa of active site Tyr is Lys-197.

Belongs to the short-chain dehydrogenases/reductases (SDR) family.

Its function is as follows. May be involved in the regulation of dNTP production. Induces the SOS system when expressed in E.coli, therefore, it may play a role in DNA metabolism and/or in genome stability. The sequence is that of Oxidoreductase-like protein SRL4 (SRL4) from Saccharomyces cerevisiae (strain ATCC 204508 / S288c) (Baker's yeast).